A 545-amino-acid chain; its full sequence is Chaperonin GroEL (545 aa).

Residues 29–32, Lys-50, 86–90, Gly-415, and Asp-495 each bind ATP; these read TLGP and DGTTT.

Belongs to the chaperonin (HSP60) family. In terms of assembly, forms a cylinder of 14 subunits composed of two heptameric rings stacked back-to-back. Interacts with the co-chaperonin GroES.

It localises to the cytoplasm. It carries out the reaction ATP + H2O + a folded polypeptide = ADP + phosphate + an unfolded polypeptide.. Together with its co-chaperonin GroES, plays an essential role in assisting protein folding. The GroEL-GroES system forms a nano-cage that allows encapsulation of the non-native substrate proteins and provides a physical environment optimized to promote and accelerate protein folding. This is Chaperonin GroEL from Bacteroides thetaiotaomicron (strain ATCC 29148 / DSM 2079 / JCM 5827 / CCUG 10774 / NCTC 10582 / VPI-5482 / E50).